A 96-amino-acid chain; its full sequence is Co-chaperonin GroES (96 aa).

This sequence belongs to the GroES chaperonin family. Heptamer of 7 subunits arranged in a ring. Interacts with the chaperonin GroEL.

It is found in the cytoplasm. Together with the chaperonin GroEL, plays an essential role in assisting protein folding. The GroEL-GroES system forms a nano-cage that allows encapsulation of the non-native substrate proteins and provides a physical environment optimized to promote and accelerate protein folding. GroES binds to the apical surface of the GroEL ring, thereby capping the opening of the GroEL channel. In Shewanella denitrificans (strain OS217 / ATCC BAA-1090 / DSM 15013), this protein is Co-chaperonin GroES.